The sequence spans 33 residues: Cysteine-rich venom protein tripurin (33 aa).

This sequence belongs to the CRISP family. Contains 8 disulfide bonds. As to expression, expressed by the venom gland.

The protein localises to the secreted. Functionally, blocks contraction of smooth muscle elicited by high potassium-induced depolarization, but does not block caffeine-stimulated contraction. May target voltage-gated calcium channels on smooth muscle. The chain is Cysteine-rich venom protein tripurin from Trimeresurus purpureomaculatus (Mangrove pit viper).